The primary structure comprises 154 residues: Putative pre-16S rRNA nuclease (154 aa).

This sequence belongs to the YqgF nuclease family.

The protein resides in the cytoplasm. Could be a nuclease involved in processing of the 5'-end of pre-16S rRNA. The sequence is that of Putative pre-16S rRNA nuclease from Gluconacetobacter diazotrophicus (strain ATCC 49037 / DSM 5601 / CCUG 37298 / CIP 103539 / LMG 7603 / PAl5).